The sequence spans 158 residues: Troponin C, isoform 1 (158 aa).

N-acetylserine is present on serine 1. 4 EF-hand domains span residues 15–50, 51–86, 91–126, and 127–158; these read EQIV…MGIK, VSST…FLIE, AMMK…LDAR, and LTAE…MMTG. Residues aspartate 64, aspartate 66, serine 68, glutamine 70, and glutamate 75 each contribute to the Ca(2+) site. Residues aspartate 140, aspartate 142, serine 144, threonine 146, and glutamate 151 each coordinate Ca(2+).

Belongs to the troponin C family.

Functionally, troponin is the central regulatory protein of striated muscle contraction. Tn consists of three components: Tn-I which is the inhibitor of actomyosin ATPase, Tn-T which contains the binding site for tropomyosin and Tn-C. The binding of calcium to Tn-C abolishes the inhibitory action of Tn on actin filaments. The protein is Troponin C, isoform 1 of Balanus nubilus (Giant acorn barnacle).